The chain runs to 510 residues: Probable sphingolipid transporter spinster homolog 3 (510 aa).

Residues 44–64 traverse the membrane as a helical segment; the sequence is SSLSPVWLLVIFCIINLLNYM. N-linked (GlcNAc...) asparagine glycosylation is found at Asn75 and Asn98. The next 11 helical transmembrane spans lie at 106-126, 136-156, 158-178, 185-205, 219-239, 298-318, 336-356, 369-387, 392-414, 430-450, and 462-482; these read VLSSSFMVGLLIASPIFASLA, VWTIAVLGCGSSFAFWFIVLC, MFVGVGEASFISLAAPFIDDN, AAWLGLFYMCIPSGVALGYVY, FWGEAVLMAPFAVLGFLMKPL, VFVVNVLGYVSYNFVIGAYSY, IFGAVTIICGIVGTLSGGFIL, LLSGATFLGAVFCFTAFTL, GFIALFALGELLVFATQAPVNYV, ISTVAIHIFGDVPSSPLVGIV, and LILTSILFLAAAIWFIGKINL.

It belongs to the major facilitator superfamily. Spinster (TC 2.A.1.49) family.

It localises to the mitochondrion inner membrane. Its function is as follows. Probable sphingolipid transporter. The sequence is that of Probable sphingolipid transporter spinster homolog 3 from Arabidopsis thaliana (Mouse-ear cress).